The following is a 124-amino-acid chain: Fluoride-specific ion channel FluC 1 (124 aa).

The next 4 membrane-spanning stretches (helical) occupy residues 1-21 (MCAV…ALGA), 30-50 (LWPG…LLGY), 64-84 (FLGV…VDAV), and 93-113 (LYVV…MLAG). Residues Gly-71 and Thr-74 each contribute to the Na(+) site.

Belongs to the fluoride channel Fluc/FEX (TC 1.A.43) family.

The protein localises to the cell membrane. It catalyses the reaction fluoride(in) = fluoride(out). Na(+) is not transported, but it plays an essential structural role and its presence is essential for fluoride channel function. In terms of biological role, fluoride-specific ion channel. Important for reducing fluoride concentration in the cell, thus reducing its toxicity. The chain is Fluoride-specific ion channel FluC 1 from Rhodococcus jostii (strain RHA1).